A 303-amino-acid chain; its full sequence is Siderophore enterobactin esterase (303 aa).

Belongs to the esterase D family. Homodimer.

The catalysed reaction is enterobactin + 3 H2O = 3 N-(2,3-dihydroxybenzoyl)-L-serine + 2 H(+). Displays specific enterobactin (ENB) esterase activity required for intracellular release of iron. Enterobactin is a xenosiderophore that is selectively produced by Gram-negative Enterobacteriaceae. The affinity for enterobactin is quite high, potentially due to the low natural abundance of this xenosiderophore in fungal habitats. Does not hydrolyze triacetylfusarinine C (TAFC). The protein is Siderophore enterobactin esterase of Emericella nidulans (strain FGSC A4 / ATCC 38163 / CBS 112.46 / NRRL 194 / M139) (Aspergillus nidulans).